A 456-amino-acid polypeptide reads, in one-letter code: Adenylosuccinate lyase (456 aa).

Residues 15 to 16 (RY), 90 to 92 (NHD), and 122 to 123 (TS) each bind N(6)-(1,2-dicarboxyethyl)-AMP. The active-site Proton donor/acceptor is the histidine 171. Position 247 (glutamine 247) interacts with N(6)-(1,2-dicarboxyethyl)-AMP. Serine 295 serves as the catalytic Proton donor/acceptor. N(6)-(1,2-dicarboxyethyl)-AMP contacts are provided by residues serine 296, 301–303 (KVN), asparagine 309, arginine 335, and 340–344 (STVLR).

The protein belongs to the lyase 1 family. Adenylosuccinate lyase subfamily. In terms of assembly, homotetramer. Residues from neighboring subunits contribute catalytic and substrate-binding residues to each active site.

The enzyme catalyses N(6)-(1,2-dicarboxyethyl)-AMP = fumarate + AMP. It catalyses the reaction (2S)-2-[5-amino-1-(5-phospho-beta-D-ribosyl)imidazole-4-carboxamido]succinate = 5-amino-1-(5-phospho-beta-D-ribosyl)imidazole-4-carboxamide + fumarate. It participates in purine metabolism; AMP biosynthesis via de novo pathway; AMP from IMP: step 2/2. It functions in the pathway purine metabolism; IMP biosynthesis via de novo pathway; 5-amino-1-(5-phospho-D-ribosyl)imidazole-4-carboxamide from 5-amino-1-(5-phospho-D-ribosyl)imidazole-4-carboxylate: step 2/2. In terms of biological role, catalyzes two reactions in de novo purine nucleotide biosynthesis. Catalyzes the breakdown of 5-aminoimidazole- (N-succinylocarboxamide) ribotide (SAICAR or 2-[5-amino-1-(5-phospho-beta-D-ribosyl)imidazole-4-carboxamido]succinate) to 5-aminoimidazole-4-carboxamide ribotide (AICAR or 5-amino-1-(5-phospho-beta-D-ribosyl)imidazole-4-carboxamide) and fumarate, and of adenylosuccinate (ADS or N(6)-(1,2-dicarboxyethyl)-AMP) to adenosine monophosphate (AMP) and fumarate. The protein is Adenylosuccinate lyase (purB) of Buchnera aphidicola subsp. Acyrthosiphon pisum (strain APS) (Acyrthosiphon pisum symbiotic bacterium).